Here is a 148-residue protein sequence, read N- to C-terminus: UPF0260 protein Maqu_1608 (148 aa).

The protein belongs to the UPF0260 family.

The protein is UPF0260 protein Maqu_1608 of Marinobacter nauticus (strain ATCC 700491 / DSM 11845 / VT8) (Marinobacter aquaeolei).